The following is a 202-amino-acid chain: Glycerol-3-phosphate acyltransferase (202 aa).

6 helical membrane passes run 2 to 22 (MIVI…GYVI), 54 to 74 (FLVT…PLWL), 88 to 108 (NGLI…YLGF), 120 to 140 (VILG…FGIL), 141 to 161 (YLTK…VIGA), and 162 to 182 (LLIR…LLII).

It belongs to the PlsY family. As to quaternary structure, probably interacts with PlsX.

The protein resides in the cell membrane. It carries out the reaction an acyl phosphate + sn-glycerol 3-phosphate = a 1-acyl-sn-glycero-3-phosphate + phosphate. Its pathway is lipid metabolism; phospholipid metabolism. Its function is as follows. Catalyzes the transfer of an acyl group from acyl-phosphate (acyl-PO(4)) to glycerol-3-phosphate (G3P) to form lysophosphatidic acid (LPA). This enzyme utilizes acyl-phosphate as fatty acyl donor, but not acyl-CoA or acyl-ACP. In Staphylococcus saprophyticus subsp. saprophyticus (strain ATCC 15305 / DSM 20229 / NCIMB 8711 / NCTC 7292 / S-41), this protein is Glycerol-3-phosphate acyltransferase.